The sequence spans 305 residues: Ribosomal RNA small subunit methyltransferase H (305 aa).

S-adenosyl-L-methionine-binding positions include Gly49–His51, Asp68, Phe100, Asp116, and Gln123.

The protein belongs to the methyltransferase superfamily. RsmH family.

It localises to the cytoplasm. It catalyses the reaction cytidine(1402) in 16S rRNA + S-adenosyl-L-methionine = N(4)-methylcytidine(1402) in 16S rRNA + S-adenosyl-L-homocysteine + H(+). Its function is as follows. Specifically methylates the N4 position of cytidine in position 1402 (C1402) of 16S rRNA. This is Ribosomal RNA small subunit methyltransferase H from Synechocystis sp. (strain ATCC 27184 / PCC 6803 / Kazusa).